The chain runs to 308 residues: Putative hydrolase MT0526 (308 aa).

Residues 1 to 48 are disordered; the sequence is MMVSSHLGSPDQAGHVDLASPADPPPPDASASHSPVDMPAPVAAAGSD. Asp-62 (nucleophile) is an active-site residue. Asp-62, Asp-64, and Asp-237 together coordinate Mg(2+). Asp-64 functions as the Proton donor in the catalytic mechanism.

The protein belongs to the HAD-like hydrolase superfamily. SerB family. Requires Mg(2+) as cofactor.

In Mycobacterium tuberculosis (strain CDC 1551 / Oshkosh), this protein is Putative hydrolase MT0526.